The chain runs to 186 residues: Signal peptidase complex catalytic subunit SEC11 (186 aa).

Residues 1 to 20 (MDALGLSKLRHLKPRQLLSQ) are Cytoplasmic-facing. A helical; Signal-anchor for type II membrane protein transmembrane segment spans residues 21–41 (VLNFALILSTAFMLWKGLSVA). Over 42–186 (TDSPSPIVVV…MGLLVIVQRE (145 aa)) the chain is Lumenal. Active-site charge relay system residues include Ser-55, His-102, and Asp-128. The tract at residues 172 to 183 (ALLGIMGLLVIV) is C-terminal short (CTS) helix.

This sequence belongs to the peptidase S26B family. In terms of assembly, component of the signal peptidase complex (SPC) composed of a catalytic subunit SEC11 and three accessory subunits SPC1, SPC2 and SPC3. The complex induces a local thinning of the ER membrane which is used to measure the length of the signal peptide (SP) h-region of protein substrates. This ensures the selectivity of the complex towards h-regions shorter than 18-20 amino acids. SPC associates with the translocon complex.

The protein resides in the endoplasmic reticulum membrane. It carries out the reaction Cleavage of hydrophobic, N-terminal signal or leader sequences from secreted and periplasmic proteins.. Its function is as follows. Catalytic component of the signal peptidase complex (SPC) which catalyzes the cleavage of N-terminal signal sequences from nascent proteins as they are translocated into the lumen of the endoplasmic reticulum. Specifically cleaves N-terminal signal peptides that contain a hydrophobic alpha-helix (h-region) shorter than 18-20 amino acids. In Tuber melanosporum (strain Mel28) (Perigord black truffle), this protein is Signal peptidase complex catalytic subunit SEC11 (SEC11).